The sequence spans 245 residues: tRNA1(Val) (adenine(37)-N6)-methyltransferase (245 aa).

This sequence belongs to the methyltransferase superfamily. tRNA (adenine-N(6)-)-methyltransferase family.

It localises to the cytoplasm. It catalyses the reaction adenosine(37) in tRNA1(Val) + S-adenosyl-L-methionine = N(6)-methyladenosine(37) in tRNA1(Val) + S-adenosyl-L-homocysteine + H(+). Functionally, specifically methylates the adenine in position 37 of tRNA(1)(Val) (anticodon cmo5UAC). This is tRNA1(Val) (adenine(37)-N6)-methyltransferase from Escherichia coli O157:H7 (strain EC4115 / EHEC).